Reading from the N-terminus, the 280-residue chain is Putative ABC transporter ATP-binding protein MTH_133 (280 aa).

The ABC transporter domain occupies 6–241; it reads IEAVDIRYTY…IDTIRGANLR (236 aa). 39–46 is an ATP binding site; that stretch reads GPNGAGKS.

Belongs to the ABC transporter superfamily.

Its subcellular location is the cell membrane. In terms of biological role, probably part of an ABC transporter complex. Responsible for energy coupling to the transport system. In Methanothermobacter thermautotrophicus (strain ATCC 29096 / DSM 1053 / JCM 10044 / NBRC 100330 / Delta H) (Methanobacterium thermoautotrophicum), this protein is Putative ABC transporter ATP-binding protein MTH_133.